Here is a 318-residue protein sequence, read N- to C-terminus: Peroxisomal and mitochondrial division factor 1 (318 aa).

Residues 1–39 (MADVEDRAAKGISDYDQGGVKTTELERKIEDMENKNQEL) are disordered. Residues 1-291 (MADVEDRAAK…QKGSLEAEYQ (291 aa)) are Cytoplasmic-facing. A coiled-coil region spans residues 19-260 (GVKTTELERK…KKVEEGNKTV (242 aa)). A compositionally biased stretch (basic and acidic residues) spans 23 to 39 (TELERKIEDMENKNQEL). Residues 292–312 (WPVVAAGSVGAAGLVAATFFV) form a helical membrane-spanning segment. The Mitochondrial intermembrane segment spans residues 313 to 318 (CYSKLR).

Homodimer. Interacts with PMD2.

Its subcellular location is the peroxisome membrane. It localises to the mitochondrion outer membrane. In terms of biological role, involved in morphogenesis and proliferation of peroxisomes and mitochondria, independently from the previously defined pathway controlled by the FIS1-DRP3 complex. This Arabidopsis thaliana (Mouse-ear cress) protein is Peroxisomal and mitochondrial division factor 1.